Reading from the N-terminus, the 138-residue chain is ATP synthase epsilon chain 2 (138 aa).

Belongs to the ATPase epsilon chain family. As to quaternary structure, F-type ATPases have 2 components, CF(1) - the catalytic core - and CF(0) - the membrane proton channel. CF(1) has five subunits: alpha(3), beta(3), gamma(1), delta(1), epsilon(1). CF(0) has three main subunits: a, b and c.

Its subcellular location is the cell inner membrane. In terms of biological role, produces ATP from ADP in the presence of a proton gradient across the membrane. The chain is ATP synthase epsilon chain 2 from Syntrophotalea carbinolica (strain DSM 2380 / NBRC 103641 / GraBd1) (Pelobacter carbinolicus).